Consider the following 347-residue polypeptide: 3-keto-steroid reductase ERG27 (347 aa).

Positions 15, 38, and 44 each coordinate NADP(+). Residues serine 179 and tyrosine 202 each act as proton donor in the active site. Residues tyrosine 202, lysine 206, and serine 237 each contribute to the NADP(+) site. The active-site Lowers pKa of active site Tyr is lysine 206. Phosphothreonine is present on threonine 345.

Belongs to the short-chain dehydrogenases/reductases (SDR) family. ERG27 subfamily. In terms of assembly, heterotetramer of ERG25, ERG26, ERG27 and ERG28. ERG28 acts as a scaffold to tether ERG27 and other 4,4-demethylation-related enzymes, forming a demethylation enzyme complex, in the endoplasmic reticulum. Interacts with ERG25 and ERG28. Also interacts with ERG7, but only in lipid particles.

It is found in the endoplasmic reticulum membrane. Its subcellular location is the lipid droplet. It carries out the reaction 3-dehydro-4alpha-methylzymosterol + NADPH + H(+) = 4alpha-methylzymosterol + NADP(+). The protein operates within steroid biosynthesis; zymosterol biosynthesis; zymosterol from lanosterol: step 5/6. In terms of biological role, 3-keto-steroid reductase; part of the third module of ergosterol biosynthesis pathway that includes the late steps of the pathway. ERG27 is a catalytic component of the C-4 demethylation complex that catalyze the reduction of the keto group on the C-3. The third module or late pathway involves the ergosterol synthesis itself through consecutive reactions that mainly occur in the endoplasmic reticulum (ER) membrane. Firstly, the squalene synthase ERG9 catalyzes the condensation of 2 farnesyl pyrophosphate moieties to form squalene, which is the precursor of all steroids. Squalene synthase is crucial for balancing the incorporation of farnesyl diphosphate (FPP) into sterol and nonsterol isoprene synthesis. Secondly, the squalene epoxidase ERG1 catalyzes the stereospecific oxidation of squalene to (S)-2,3-epoxysqualene, which is considered to be a rate-limiting enzyme in steroid biosynthesis. Then, the lanosterol synthase ERG7 catalyzes the cyclization of (S)-2,3 oxidosqualene to lanosterol, a reaction that forms the sterol core. In the next steps, lanosterol is transformed to zymosterol through a complex process involving various demethylation, reduction and desaturation reactions. The lanosterol 14-alpha-demethylase ERG11 (also known as CYP51) catalyzes C14-demethylation of lanosterol to produce 4,4'-dimethyl cholesta-8,14,24-triene-3-beta-ol, which is critical for ergosterol biosynthesis. The C-14 reductase ERG24 reduces the C14=C15 double bond of 4,4-dimethyl-cholesta-8,14,24-trienol to produce 4,4-dimethyl-cholesta-8,24-dienol. 4,4-dimethyl-cholesta-8,24-dienol is substrate of the C-4 demethylation complex ERG25-ERG26-ERG27 in which ERG25 catalyzes the three-step monooxygenation required for the demethylation of 4,4-dimethyl and 4alpha-methylsterols, ERG26 catalyzes the oxidative decarboxylation that results in a reduction of the 3-beta-hydroxy group at the C-3 carbon to an oxo group, and ERG27 is responsible for the reduction of the keto group on the C-3. ERG28 has a role as a scaffold to help anchor ERG25, ERG26 and ERG27 to the endoplasmic reticulum and ERG29 regulates the activity of the iron-containing C4-methylsterol oxidase ERG25. Then, the sterol 24-C-methyltransferase ERG6 catalyzes the methyl transfer from S-adenosyl-methionine to the C-24 of zymosterol to form fecosterol. The C-8 sterol isomerase ERG2 catalyzes the reaction which results in unsaturation at C-7 in the B ring of sterols and thus converts fecosterol to episterol. The sterol-C5-desaturase ERG3 then catalyzes the introduction of a C-5 double bond in the B ring to produce 5-dehydroepisterol. The C-22 sterol desaturase ERG5 further converts 5-dehydroepisterol into ergosta-5,7,22,24(28)-tetraen-3beta-ol by forming the C-22(23) double bond in the sterol side chain. Finally, ergosta-5,7,22,24(28)-tetraen-3beta-ol is substrate of the C-24(28) sterol reductase ERG4 to produce ergosterol. Facilitates the association of ERG7 with lipid particles preventing its digestion in the endoplasmic reticulum and the lipid particles. This chain is 3-keto-steroid reductase ERG27, found in Saccharomyces cerevisiae (strain ATCC 204508 / S288c) (Baker's yeast).